Consider the following 648-residue polypeptide: Biosynthetic arginine decarboxylase (648 aa).

K109 carries the post-translational modification N6-(pyridoxal phosphate)lysine. 291–301 (IDVGGGLGIDF) lines the substrate pocket.

The protein belongs to the Orn/Lys/Arg decarboxylase class-II family. SpeA subfamily. It depends on Mg(2+) as a cofactor. The cofactor is pyridoxal 5'-phosphate.

The catalysed reaction is L-arginine + H(+) = agmatine + CO2. Catalyzes the biosynthesis of agmatine from arginine. This is Biosynthetic arginine decarboxylase from Prochlorococcus marinus subsp. pastoris (strain CCMP1986 / NIES-2087 / MED4).